A 194-amino-acid chain; its full sequence is GTP cyclohydrolase-2 (194 aa).

Residue 50 to 54 coordinates GTP; it reads RIHSE. Zn(2+)-binding residues include Cys55, Cys66, and Cys68. Residues 94–96 and Thr116 each bind GTP; that span reads EGR. Residue Asp128 is the Proton acceptor of the active site. The active-site Nucleophile is the Arg130. The GTP site is built by Thr151 and Lys156.

The protein belongs to the GTP cyclohydrolase II family. The cofactor is Zn(2+).

It catalyses the reaction GTP + 4 H2O = 2,5-diamino-6-hydroxy-4-(5-phosphoribosylamino)-pyrimidine + formate + 2 phosphate + 3 H(+). The protein operates within cofactor biosynthesis; riboflavin biosynthesis; 5-amino-6-(D-ribitylamino)uracil from GTP: step 1/4. In terms of biological role, catalyzes the conversion of GTP to 2,5-diamino-6-ribosylamino-4(3H)-pyrimidinone 5'-phosphate (DARP), formate and pyrophosphate. This Helicobacter hepaticus (strain ATCC 51449 / 3B1) protein is GTP cyclohydrolase-2.